We begin with the raw amino-acid sequence, 264 residues long: Glutamate racemase (264 aa).

Substrate is bound by residues 9–10 (DS) and 41–42 (YG). The active-site Proton donor/acceptor is Cys-72. 73-74 (NT) contributes to the substrate binding site. Cys-183 serves as the catalytic Proton donor/acceptor. 184–185 (TH) serves as a coordination point for substrate.

The protein belongs to the aspartate/glutamate racemases family.

It carries out the reaction L-glutamate = D-glutamate. Its pathway is cell wall biogenesis; peptidoglycan biosynthesis. Its function is as follows. Provides the (R)-glutamate required for cell wall biosynthesis. This chain is Glutamate racemase, found in Geobacillus kaustophilus (strain HTA426).